The sequence spans 610 residues: Elongation factor 4 (610 aa).

The 183-residue stretch at 15–197 folds into the tr-type G domain; the sequence is KSIRNFSIIA…RIINDIPYPK (183 aa). GTP contacts are provided by residues 27-32 and 144-147; these read DHGKST and NKID.

It belongs to the TRAFAC class translation factor GTPase superfamily. Classic translation factor GTPase family. LepA subfamily.

The protein resides in the cell membrane. It catalyses the reaction GTP + H2O = GDP + phosphate + H(+). In terms of biological role, required for accurate and efficient protein synthesis under certain stress conditions. May act as a fidelity factor of the translation reaction, by catalyzing a one-codon backward translocation of tRNAs on improperly translocated ribosomes. Back-translocation proceeds from a post-translocation (POST) complex to a pre-translocation (PRE) complex, thus giving elongation factor G a second chance to translocate the tRNAs correctly. Binds to ribosomes in a GTP-dependent manner. This Buchnera aphidicola subsp. Acyrthosiphon pisum (strain 5A) protein is Elongation factor 4.